We begin with the raw amino-acid sequence, 372 residues long: Glutamate 5-kinase (372 aa).

Lys-14 is an ATP binding site. The substrate site is built by Ser-54, Asp-141, and Asn-153. ATP is bound by residues 173-174 (TD) and 215-221 (TGGMITK). The region spanning 280 to 358 (AGRLLLDDGA…REIEAALGYI (79 aa)) is the PUA domain.

The protein belongs to the glutamate 5-kinase family.

The protein localises to the cytoplasm. It carries out the reaction L-glutamate + ATP = L-glutamyl 5-phosphate + ADP. Its pathway is amino-acid biosynthesis; L-proline biosynthesis; L-glutamate 5-semialdehyde from L-glutamate: step 1/2. In terms of biological role, catalyzes the transfer of a phosphate group to glutamate to form L-glutamate 5-phosphate. This Chromobacterium violaceum (strain ATCC 12472 / DSM 30191 / JCM 1249 / CCUG 213 / NBRC 12614 / NCIMB 9131 / NCTC 9757 / MK) protein is Glutamate 5-kinase.